The chain runs to 122 residues: uncharacterized protein (122 aa).

The stretch at 79–114 forms a coiled coil; the sequence is VIEDVASAIKEMMESAAKDLDKIEEVIKESLEKYLR.

This is an uncharacterized protein from Archaeoglobus fulgidus (strain ATCC 49558 / DSM 4304 / JCM 9628 / NBRC 100126 / VC-16).